The following is a 357-amino-acid chain: NADH-quinone oxidoreductase subunit H (357 aa).

8 consecutive transmembrane segments (helical) span residues 25-45 (ILII…VVAY), 94-114 (IYLF…VWVV), 130-150 (LLYV…AGWA), 166-186 (LLVS…MIAG), 201-221 (IIYW…ISAL), 254-274 (FFLA…VMFF), 294-314 (VPGI…YLWV), and 329-349 (LSWK…ALMT).

The protein belongs to the complex I subunit 1 family. As to quaternary structure, NDH-1 is composed of 14 different subunits. Subunits NuoA, H, J, K, L, M, N constitute the membrane sector of the complex.

Its subcellular location is the cell inner membrane. The enzyme catalyses a quinone + NADH + 5 H(+)(in) = a quinol + NAD(+) + 4 H(+)(out). Its function is as follows. NDH-1 shuttles electrons from NADH, via FMN and iron-sulfur (Fe-S) centers, to quinones in the respiratory chain. The immediate electron acceptor for the enzyme in this species is believed to be ubiquinone. Couples the redox reaction to proton translocation (for every two electrons transferred, four hydrogen ions are translocated across the cytoplasmic membrane), and thus conserves the redox energy in a proton gradient. This subunit may bind ubiquinone. The sequence is that of NADH-quinone oxidoreductase subunit H from Ruthia magnifica subsp. Calyptogena magnifica.